The sequence spans 745 residues: Phosphoribosylformylglycinamidine synthase subunit PurL (745 aa).

His-47 is a catalytic residue. Tyr-50 and Lys-90 together coordinate ATP. Mg(2+) is bound at residue Glu-92. Substrate contacts are provided by residues 93–96 (SHNH) and Arg-115. The active-site Proton acceptor is His-94. A Mg(2+)-binding site is contributed by Asp-116. Gln-240 lines the substrate pocket. Asp-268 contributes to the Mg(2+) binding site. 312–314 (ESQ) is a binding site for substrate. Positions 501 and 538 each coordinate ATP. Mg(2+) is bound at residue Asn-539. Ser-541 contacts substrate.

The protein belongs to the FGAMS family. In terms of assembly, monomer. Part of the FGAM synthase complex composed of 1 PurL, 1 PurQ and 2 PurS subunits.

It is found in the cytoplasm. It carries out the reaction N(2)-formyl-N(1)-(5-phospho-beta-D-ribosyl)glycinamide + L-glutamine + ATP + H2O = 2-formamido-N(1)-(5-O-phospho-beta-D-ribosyl)acetamidine + L-glutamate + ADP + phosphate + H(+). Its pathway is purine metabolism; IMP biosynthesis via de novo pathway; 5-amino-1-(5-phospho-D-ribosyl)imidazole from N(2)-formyl-N(1)-(5-phospho-D-ribosyl)glycinamide: step 1/2. Functionally, part of the phosphoribosylformylglycinamidine synthase complex involved in the purines biosynthetic pathway. Catalyzes the ATP-dependent conversion of formylglycinamide ribonucleotide (FGAR) and glutamine to yield formylglycinamidine ribonucleotide (FGAM) and glutamate. The FGAM synthase complex is composed of three subunits. PurQ produces an ammonia molecule by converting glutamine to glutamate. PurL transfers the ammonia molecule to FGAR to form FGAM in an ATP-dependent manner. PurS interacts with PurQ and PurL and is thought to assist in the transfer of the ammonia molecule from PurQ to PurL. The polypeptide is Phosphoribosylformylglycinamidine synthase subunit PurL (Leptospira borgpetersenii serovar Hardjo-bovis (strain JB197)).